The sequence spans 99 residues: Putative UPF0320 protein YDR543C (99 aa).

The segment at 80–99 is disordered; that stretch reads EKSPPKSPKHKNILSFNNNT.

Belongs to the UPF0320 family.

This chain is Putative UPF0320 protein YDR543C, found in Saccharomyces cerevisiae (strain ATCC 204508 / S288c) (Baker's yeast).